A 452-amino-acid polypeptide reads, in one-letter code: MKAKAILLASVLLVGCQSTGNVQQHAQSLSAAGQGEAAKFTSQARWMDDGTSIAPDGDLWAFIGDELKMGIPENDRIREQKQKYLRNKSYLHDVTLRAEPYMYWIAGQVKKRNMPMELVLLPIVESAFDPHATSGANAAGIWQIIPSTGRNYGLKQTRNYDARRDVVASTTAALNMMQRLNKMFDGDWLLTVAAYNSGEGRVMKAIKTNKARGKSTDFWSLPLPQETKQYVPKMLALSDILKNSKRYGVRLPTTDESRALARVHLSSPVEMAKVADMAGISVSKLKTFNAGVKGSTLGASGPQYVMVPKKHADQLRESLASGEIAAVQSTLVADNTPLNSRVYTVRSGDTLSSIASRLGVSTKDLQQWNKLRGSKLKPGQSLTIGAGSSAQRLANNSDSITYRVRKGDSLSSIAKRHGVNIKDVMRWNSDTANLQPGDKLTLFVKNNNMPDS.

An N-terminal signal peptide occupies residues 1 to 15 (MKAKAILLASVLLVG). Cysteine 16 carries N-palmitoyl cysteine lipidation. A lipid anchor (S-diacylglycerol cysteine) is attached at cysteine 16. A slt-type domain region spans residues 113–198 (NMPMELVLLP…LLTVAAYNSG (86 aa)). The active site involves glutamate 125. 2 consecutive LysM domains span residues 341–384 (RVYT…SLTI) and 400–448 (ITYR…KNNN).

Belongs to the transglycosylase Slt family.

The protein localises to the cell membrane. It carries out the reaction Exolytic cleavage of the (1-&gt;4)-beta-glycosidic linkage between N-acetylmuramic acid (MurNAc) and N-acetylglucosamine (GlcNAc) residues in peptidoglycan, from either the reducing or the non-reducing ends of the peptidoglycan chains, with concomitant formation of a 1,6-anhydrobond in the MurNAc residue.. Murein-degrading enzyme. May play a role in recycling of muropeptides during cell elongation and/or cell division. This Escherichia coli O6:H1 (strain CFT073 / ATCC 700928 / UPEC) protein is Membrane-bound lytic murein transglycosylase D (mltD).